Here is a 335-residue protein sequence, read N- to C-terminus: Glycerol-3-phosphate dehydrogenase [NAD(P)+] (335 aa).

Serine 12, tryptophan 13, and lysine 107 together coordinate NADPH. Sn-glycerol 3-phosphate contacts are provided by lysine 107, glycine 138, and serine 140. Alanine 142 contributes to the NADPH binding site. Sn-glycerol 3-phosphate is bound by residues lysine 193, aspartate 246, serine 256, arginine 257, and asparagine 258. The active-site Proton acceptor is lysine 193. Residue arginine 257 participates in NADPH binding. The NADPH site is built by valine 281 and glutamate 283.

Belongs to the NAD-dependent glycerol-3-phosphate dehydrogenase family.

The protein localises to the cytoplasm. It carries out the reaction sn-glycerol 3-phosphate + NAD(+) = dihydroxyacetone phosphate + NADH + H(+). The catalysed reaction is sn-glycerol 3-phosphate + NADP(+) = dihydroxyacetone phosphate + NADPH + H(+). It functions in the pathway membrane lipid metabolism; glycerophospholipid metabolism. In terms of biological role, catalyzes the reduction of the glycolytic intermediate dihydroxyacetone phosphate (DHAP) to sn-glycerol 3-phosphate (G3P), the key precursor for phospholipid synthesis. The polypeptide is Glycerol-3-phosphate dehydrogenase [NAD(P)+] (Citrifermentans bemidjiense (strain ATCC BAA-1014 / DSM 16622 / JCM 12645 / Bem) (Geobacter bemidjiensis)).